A 289-amino-acid chain; its full sequence is Rhodopsin (289 aa).

The Extracellular portion of the chain corresponds to Y1 to A7. Residues Y8–V32 traverse the membrane as a helical segment. Topologically, residues T33–N44 are cytoplasmic. Residues Y45–Y67 traverse the membrane as a helical segment. The Extracellular segment spans residues T68 to C81. C81 and C158 are joined by a disulfide. Residues N82–I104 form a helical membrane-spanning segment. A 'Ionic lock' involved in activated form stabilization motif is present at residues E105–W107. The Cytoplasmic portion of the chain corresponds to E105–H123. Residues A124–V144 form a helical membrane-spanning segment. Residues G145–S173 lie on the Extracellular side of the membrane. A helical membrane pass occupies residues F174–G195. Residues R196–R223 are Cytoplasmic-facing. Residues M224–W245 traverse the membrane as a helical segment. The Extracellular segment spans residues I246–V257. The chain crosses the membrane as a helical span at residues F258–C279. K267 carries the N6-(retinylidene)lysine modification. The Cytoplasmic segment spans residues M280–I289.

Belongs to the G-protein coupled receptor 1 family. Opsin subfamily. Phosphorylated on some or all of the serine and threonine residues present in the C-terminal region. In terms of processing, contains one covalently linked retinal chromophore.

It is found in the membrane. The protein localises to the cell projection. The protein resides in the cilium. It localises to the photoreceptor outer segment. Functionally, photoreceptor required for image-forming vision at low light intensity. While most salt water fish species use retinal as chromophore, most freshwater fish use 3-dehydroretinal, or a mixture of retinal and 3-dehydroretinal. Light-induced isomerization of 11-cis to all-trans retinal triggers a conformational change that activates signaling via G-proteins. Subsequent receptor phosphorylation mediates displacement of the bound G-protein alpha subunit by arrestin and terminates signaling. The chain is Rhodopsin (rho) from Comephorus dybowskii.